The primary structure comprises 247 residues: Ribosomal RNA large subunit methyltransferase E (247 aa).

Residues 1–21 (MKVNPKNSPKDNLKDSPKVSA) form a disordered region. The span at 8–17 (SPKDNLKDSP) shows a compositional bias: basic and acidic residues. 5 residues coordinate S-adenosyl-L-methionine: Gly80, Trp82, Asp108, Asp124, and Asp153. Lys193 acts as the Proton acceptor in catalysis.

The protein belongs to the class I-like SAM-binding methyltransferase superfamily. RNA methyltransferase RlmE family.

The protein resides in the cytoplasm. It carries out the reaction uridine(2552) in 23S rRNA + S-adenosyl-L-methionine = 2'-O-methyluridine(2552) in 23S rRNA + S-adenosyl-L-homocysteine + H(+). In terms of biological role, specifically methylates the uridine in position 2552 of 23S rRNA at the 2'-O position of the ribose in the fully assembled 50S ribosomal subunit. This chain is Ribosomal RNA large subunit methyltransferase E, found in Polaromonas sp. (strain JS666 / ATCC BAA-500).